We begin with the raw amino-acid sequence, 424 residues long: Piriformospora indica-insensitive protein 2 (424 aa).

The first 21 residues, 1–21, serve as a signal peptide directing secretion; the sequence is MLWQTFFSSLLLLSLLFGCNG. LRR repeat units lie at residues 141–166, 167–190, 191–213, 214–237, 238–263, 265–286, 287–311, 312–336, 337–360, and 362–387; these read ASNLESLEFRSNPGLIGELPETIGNL, TKLKSLVVLENGFSGELPASICNL, KRLKRLVFAGNSFAGMIPNCFKG, LKELLILDLSRNSFSGTLPTSFGD, LVSLLKLDLSNNLLEGNLPQELGFLK, LTLLDLRNNRFSGGLSKNIENI, QSLTELVLSNNPMGEEDMVGTNWGK, MSNLVVLDLSKMGLRGEIPTSLTNL, KRLRFLGLNNNNLTGFVPSKKLEA, and PCLGALYINGNNLTGELRFSTKFYEK.

It localises to the cell membrane. Functionally, required for growth promotion and enhanced seed production mediated by the endophytic fungus Piriformospora indica. The sequence is that of Piriformospora indica-insensitive protein 2 (PII-2) from Arabidopsis thaliana (Mouse-ear cress).